Consider the following 77-residue polypeptide: Conotoxin LiC42 (77 aa).

The N-terminal stretch at 1–22 (MKLTCVLIIAVLFLTASQLITA) is a signal peptide. A propeptide spanning residues 23 to 47 (DYSRDKQEYGAERLRDAMGKFKGSR) is cleaved from the precursor. 3 disulfide bridges follow: Cys49/Cys62, Cys56/Cys67, and Cys61/Cys76.

Belongs to the conotoxin O1 superfamily. Expressed by the venom duct.

The protein resides in the secreted. The sequence is that of Conotoxin LiC42 from Conus lividus (Livid cone).